Reading from the N-terminus, the 427-residue chain is Glutamate-1-semialdehyde 2,1-aminomutase (427 aa).

N6-(pyridoxal phosphate)lysine is present on Lys-267.

It belongs to the class-III pyridoxal-phosphate-dependent aminotransferase family. HemL subfamily. As to quaternary structure, homodimer. It depends on pyridoxal 5'-phosphate as a cofactor.

The protein localises to the cytoplasm. The enzyme catalyses (S)-4-amino-5-oxopentanoate = 5-aminolevulinate. Its pathway is porphyrin-containing compound metabolism; protoporphyrin-IX biosynthesis; 5-aminolevulinate from L-glutamyl-tRNA(Glu): step 2/2. The protein is Glutamate-1-semialdehyde 2,1-aminomutase of Acetivibrio thermocellus (strain ATCC 27405 / DSM 1237 / JCM 9322 / NBRC 103400 / NCIMB 10682 / NRRL B-4536 / VPI 7372) (Clostridium thermocellum).